Reading from the N-terminus, the 151-residue chain is Inorganic triphosphatase (151 aa).

The CYTH domain maps to 1–148 (MTEIERKFLV…KRYKNKALAL (148 aa)). Catalysis depends on Tyr27, which acts as the Proton acceptor.

Homodimer.

The enzyme catalyses triphosphate + H2O = phosphate + diphosphate. Activated by magnesium and mangenese ions, and inhibited by calcium, zinc and copper ions. Involved in the hydrolysis of the beta-gamma-phosphoanhydride linkage of triphosphate-containing substrates (inorganic or nucleoside-linked). Catalyzes the hydrolysis of inorganic triphosphate (PPPi). The enzyme has a strong preference for linear PPPi compared with cyclic PPPi (cyclic trimetaphosphate) and to the linear P4. The longer chains polyphosphate are not hydrolyzed. It has only a slight thiamine triphosphatase (ThTPase) activity. Nucleoside triphosphatase activity is negligible in the presence of magnesium, but a small activity is observed in the presence of manganese, in particular with GTP. The polypeptide is Inorganic triphosphatase (Nitrosomonas europaea (strain ATCC 19718 / CIP 103999 / KCTC 2705 / NBRC 14298)).